The following is a 467-amino-acid chain: Methylenetetrahydrofolate--tRNA-(uracil-5-)-methyltransferase TrmFO (467 aa).

11–16 (GAGLAG) contacts FAD.

The protein belongs to the MnmG family. TrmFO subfamily. Requires FAD as cofactor.

The protein resides in the cytoplasm. The catalysed reaction is uridine(54) in tRNA + (6R)-5,10-methylene-5,6,7,8-tetrahydrofolate + NADH + H(+) = 5-methyluridine(54) in tRNA + (6S)-5,6,7,8-tetrahydrofolate + NAD(+). It carries out the reaction uridine(54) in tRNA + (6R)-5,10-methylene-5,6,7,8-tetrahydrofolate + NADPH + H(+) = 5-methyluridine(54) in tRNA + (6S)-5,6,7,8-tetrahydrofolate + NADP(+). Functionally, catalyzes the folate-dependent formation of 5-methyl-uridine at position 54 (M-5-U54) in all tRNAs. The chain is Methylenetetrahydrofolate--tRNA-(uracil-5-)-methyltransferase TrmFO from Prochlorococcus marinus (strain MIT 9303).